The chain runs to 973 residues: Ras-related protein Rab-44 (973 aa).

Basic residues predominate over residues 1–21; that stretch reads MEKGKGVSRKGRKLASSRRRQ. The segment at 1–42 is disordered; it reads MEKGKGVSRKGRKLASSRRRQAREPADGQDAPVAAEAESWPS. The EF-hand domain maps to 77-111; that stretch reads GGEEPQMIFDWVDVESRGHLSLEEFSSGLKNVFGS. Residues 112-140 form a disordered region; the sequence is SPGTHRLRTKRSLPSQRESVTSTLPVPEE. A compositionally biased stretch (polar residues) spans 123–135; sequence SLPSQRESVTSTL. A coiled-coil region spans residues 219–310; it reads LYKVRQLYEE…ERDLAGQLEE (92 aa). Disordered regions lie at residues 319-368, 421-481, 493-708, and 724-779; these read RGHL…FGNN, FSQE…GSFL, GTVE…GLAV, and EAQP…GKPQ. The segment covering 428-440 has biased composition (pro residues); it reads DPDPGPRGSPEVP. The segment covering 445 to 457 has biased composition (basic and acidic residues); sequence KDGKGVEDPKGQD. Positions 513–524 are enriched in low complexity; the sequence is GLSSSPQSPAGS. Basic and acidic residues-rich tracts occupy residues 548–559, 598–608, and 654–663; these read SLEREVMAEDLK, HLARQESHAKG, and SESHGLEARS. Residues 665-680 show a composition bias toward polar residues; the sequence is ESPQQDDPLPNTSQPP. The segment covering 750-766 has biased composition (basic and acidic residues); it reads AESRPEDPRTDLQEAER. GTP contacts are provided by residues 792–799, 840–844, and 898–901; these read GDSNVGKT, DTAGQ, and NKMD. 2 S-geranylgeranyl cysteine lipidation sites follow: Cys-971 and Cys-972.

Belongs to the small GTPase superfamily. Rab family.

The protein localises to the cell membrane. This chain is Ras-related protein Rab-44 (Rab44), found in Mus musculus (Mouse).